The following is a 471-amino-acid chain: Arginine biosynthesis bifunctional protein ArgJ, mitochondrial (471 aa).

Residues M1–Y33 constitute a mitochondrion transit peptide. Residues T201, K230, T241, E327, N466, and T471 each contribute to the substrate site. T241 (nucleophile) is an active-site residue.

Belongs to the ArgJ family. Heterodimer of an alpha and a beta chain. Post-translationally, the alpha and beta chains are autoproteolytically processed from a single precursor protein within the mitochondrion.

It is found in the mitochondrion matrix. The catalysed reaction is N(2)-acetyl-L-ornithine + L-glutamate = N-acetyl-L-glutamate + L-ornithine. The enzyme catalyses L-glutamate + acetyl-CoA = N-acetyl-L-glutamate + CoA + H(+). Its pathway is amino-acid biosynthesis; L-arginine biosynthesis; L-ornithine and N-acetyl-L-glutamate from L-glutamate and N(2)-acetyl-L-ornithine (cyclic): step 1/1. It participates in amino-acid biosynthesis; L-arginine biosynthesis; N(2)-acetyl-L-ornithine from L-glutamate: step 1/4. Functionally, catalyzes two activities which are involved in the cyclic version of arginine biosynthesis: the synthesis of acetylglutamate from glutamate and acetyl-CoA, and of ornithine by transacetylation between acetylornithine and glutamate. The polypeptide is Arginine biosynthesis bifunctional protein ArgJ, mitochondrial (Chaetomium globosum (strain ATCC 6205 / CBS 148.51 / DSM 1962 / NBRC 6347 / NRRL 1970) (Soil fungus)).